Consider the following 149-residue polypeptide: Large ribosomal subunit protein bL9 (149 aa).

The protein belongs to the bacterial ribosomal protein bL9 family.

Its function is as follows. Binds to the 23S rRNA. The chain is Large ribosomal subunit protein bL9 from Synechococcus sp. (strain JA-2-3B'a(2-13)) (Cyanobacteria bacterium Yellowstone B-Prime).